The primary structure comprises 257 residues: Adenosylcobinamide-GDP ribazoletransferase (257 aa).

4 consecutive transmembrane segments (helical) span residues 28 to 48 (FARS…LVAL), 50 to 70 (LFVP…VYAV), 110 to 130 (VALA…VEVA), and 199 to 219 (WPQV…AALV).

It belongs to the CobS family. Mg(2+) serves as cofactor.

The protein localises to the cell membrane. The enzyme catalyses alpha-ribazole + adenosylcob(III)inamide-GDP = adenosylcob(III)alamin + GMP + H(+). It catalyses the reaction alpha-ribazole 5'-phosphate + adenosylcob(III)inamide-GDP = adenosylcob(III)alamin 5'-phosphate + GMP + H(+). It participates in cofactor biosynthesis; adenosylcobalamin biosynthesis; adenosylcobalamin from cob(II)yrinate a,c-diamide: step 7/7. Functionally, joins adenosylcobinamide-GDP and alpha-ribazole to generate adenosylcobalamin (Ado-cobalamin). Also synthesizes adenosylcobalamin 5'-phosphate from adenosylcobinamide-GDP and alpha-ribazole 5'-phosphate. The chain is Adenosylcobinamide-GDP ribazoletransferase from Halorubrum lacusprofundi (strain ATCC 49239 / DSM 5036 / JCM 8891 / ACAM 34).